The following is a 1079-amino-acid chain: Adhesion G-protein coupled receptor F3 (1079 aa).

A signal peptide spans 1-25; the sequence is MVCSAAPLLLLATTLPLLGSPVAQA. Residues 26–775 are Extracellular-facing; sequence SQPVSETGVR…EEPALALLTQ (750 aa). N-linked (GlcNAc...) asparagine glycans are attached at residues N188, N264, N301, N382, N441, and N648. The 167-residue stretch at 599 to 765 folds into the GAIN-B domain; that stretch reads HPFAFSLPNV…SVLMSPHTVP (167 aa). 2 disulfides stabilise this stretch: C715–C747 and C734–C749. The interval 715-765 is GPS; it reads CVFWDHSLFQGRGGWSKEGCQAQVASASPTAQCLCQHLTAFSVLMSPHTVP. Residues 776 to 796 form a helical membrane-spanning segment; that stretch reads VGLGASILALLVCLGVYWLVW. Topologically, residues 797–811 are cytoplasmic; that stretch reads RVVVRNKISYFRHAA. The chain crosses the membrane as a helical span at residues 812 to 832; the sequence is LLNMVFCLLAADTCFLGAPFL. The Extracellular segment spans residues 833–851; sequence SPGPRSPLCLAAAFLCHFL. A helical transmembrane segment spans residues 852-874; it reads YLATFFWMLAQALVLAHQLLFVF. Over 875 to 881 the chain is Cytoplasmic; the sequence is HQLAKHR. The helical transmembrane segment at 882-902 threads the bilayer; it reads VLPLMVLLGYLCPLGLAGVTL. Topologically, residues 903–928 are extracellular; the sequence is GLYLPQGQYLREGECWLDGKGGALYT. The chain crosses the membrane as a helical span at residues 929–949; the sequence is FVGPVLAIIGVNGLVLAMAML. The Cytoplasmic segment spans residues 950–973; it reads KLLRPSLSEGPPAEKRQALLGVIK. A helical transmembrane segment spans residues 974 to 994; it reads ALLILTPIFGLTWGLGLATLL. Topologically, residues 995–1002 are extracellular; that stretch reads EEVSTVPH. Residues 1003 to 1023 form a helical membrane-spanning segment; the sequence is YIFTILNTLQGVFILLFGCLM. The Cytoplasmic portion of the chain corresponds to 1024–1079; sequence DRKIQEALRKRFCRAQAPSSTISLVSCCLQILSCASKSMSEGIPWPSSEDMGTARS.

This sequence belongs to the G-protein coupled receptor 2 family. Adhesion G-protein coupled receptor (ADGR) subfamily. Heterodimer of 2 chains generated by proteolytic processing; the large extracellular N-terminal fragment and the membrane-bound C-terminal fragment predominantly remain associated and non-covalently linked. Autoproteolytically processed at the GPS region of the GAIN-B domain; this cleavage modulates receptor activity.

The protein localises to the membrane. In terms of biological role, orphan receptor. The sequence is that of Adhesion G-protein coupled receptor F3 (ADGRF3) from Homo sapiens (Human).